A 105-amino-acid polypeptide reads, in one-letter code: uncharacterized protein (105 aa).

This is an uncharacterized protein from Saccharolobus islandicus (Sulfolobus islandicus).